Consider the following 277-residue polypeptide: Carbonyl reductase [NADPH] 1 (277 aa).

Residue serine 2 is modified to N-acetylserine. Phosphoserine is present on residues serine 2 and serine 30. NADP(+) contacts are provided by residues valine 10–valine 34, aspartate 63–isoleucine 64, and asparagine 90. Residues phenylalanine 95–valine 97 and glutamine 106 each bind glutathione. Serine 140 provides a ligand contact to substrate. A glutathione-binding site is contributed by alanine 193 to tyrosine 194. Catalysis depends on tyrosine 194, which acts as the Proton acceptor. NADP(+) is bound by residues tyrosine 194–lysine 198 and valine 231–threonine 233. An N6-1-carboxyethyl lysine modification is found at lysine 239.

This sequence belongs to the short-chain dehydrogenases/reductases (SDR) family. Monomer.

The protein localises to the cytoplasm. It catalyses the reaction a secondary alcohol + NADP(+) = a ketone + NADPH + H(+). The catalysed reaction is prostaglandin F2alpha + NADP(+) = prostaglandin E2 + NADPH + H(+). The enzyme catalyses prostaglandin E1 + NADP(+) = 15-oxoprostaglandin E1 + NADPH + H(+). It carries out the reaction menadione + NADPH + H(+) = menadiol + NADP(+). It catalyses the reaction prostaglandin D2 + NADP(+) = 15-oxoprostaglandin D2 + NADPH + H(+). The catalysed reaction is prostaglandin E2 + NADP(+) = 15-oxoprostaglandin E2 + NADPH + H(+). The enzyme catalyses prostaglandin F2alpha + NADP(+) = 15-oxoprostaglandin F2alpha + NADPH + H(+). It carries out the reaction daunorubicin + NADPH + H(+) = 13-dihydrodaunorubicin + NADP(+). It catalyses the reaction S-nitrosoglutathione + NADPH + H(+) = S-(hydroxysulfenamide)glutathione + NADP(+). The catalysed reaction is a primary alcohol + NADP(+) = an aldehyde + NADPH + H(+). The enzyme catalyses cortisol + NADPH + H(+) = 20beta-dihydrocortisol + NADP(+). It carries out the reaction corticosterone + NADPH + H(+) = 20beta-dihydrocorticosterone + NADP(+). In terms of biological role, NADPH-dependent reductase with broad substrate specificity. Catalyzes the reduction of a wide variety of carbonyl compounds including quinones, prostaglandins, menadione, plus various xenobiotics. Catalyzes the reduction of the antitumor anthracyclines doxorubicin and daunorubicin to the cardiotoxic compounds doxorubicinol and daunorubicinol. Can convert prostaglandin E to prostaglandin F2-alpha. Can bind glutathione, which explains its higher affinity for glutathione-conjugated substrates. Catalyzes the reduction of S-nitrosoglutathione. In addition, participates in the glucocorticoid metabolism by catalyzing the NADPH-dependent cortisol/corticosterone into 20beta-dihydrocortisol (20b-DHF) or 20beta-corticosterone (20b-DHB), which are weak agonists of NR3C1 and NR3C2 in adipose tissue. This chain is Carbonyl reductase [NADPH] 1, found in Pongo abelii (Sumatran orangutan).